A 385-amino-acid chain; its full sequence is Photoreceptor ankyrin repeat protein (385 aa).

ANK repeat units lie at residues Cys-17–Glu-46, Asn-53–Gln-83, Asp-87–Leu-116, Arg-122–Ser-151, and Arg-156–Leu-190. The disordered stretch occupies residues Leu-270 to Lys-385. A compositionally biased stretch (pro residues) spans Ala-284 to Val-297. Residues Ala-304–Gln-326 are compositionally biased toward polar residues. A compositionally biased stretch (basic and acidic residues) spans Phe-361–Pro-373. Over residues Arg-374–Lys-385 the composition is skewed to gly residues.

Isoform 1: Expressed predominantly in the retina. Isoform 2: Expressed in the pineal gland.

The protein resides in the cytoplasm. It localises to the cytosol. Its subcellular location is the nucleus. Functionally, acts as a transcriptional repressor for CRX-activated photoreceptor gene regulation. The sequence is that of Photoreceptor ankyrin repeat protein from Mus musculus (Mouse).